The chain runs to 598 residues: Aspartate--tRNA(Asp/Asn) ligase (598 aa).

Glutamate 172 provides a ligand contact to L-aspartate. The segment at 196–199 (QLFK) is aspartate. Arginine 218 lines the L-aspartate pocket. ATP is bound by residues 218-220 (RDE) and glutamine 227. An L-aspartate-binding site is contributed by histidine 455. Position 489 (glutamate 489) interacts with ATP. Position 496 (arginine 496) interacts with L-aspartate. Residue 541–544 (GLDR) participates in ATP binding.

The protein belongs to the class-II aminoacyl-tRNA synthetase family. Type 1 subfamily. As to quaternary structure, homodimer.

It localises to the cytoplasm. The catalysed reaction is tRNA(Asx) + L-aspartate + ATP = L-aspartyl-tRNA(Asx) + AMP + diphosphate. Aspartyl-tRNA synthetase with relaxed tRNA specificity since it is able to aspartylate not only its cognate tRNA(Asp) but also tRNA(Asn). Reaction proceeds in two steps: L-aspartate is first activated by ATP to form Asp-AMP and then transferred to the acceptor end of tRNA(Asp/Asn). The chain is Aspartate--tRNA(Asp/Asn) ligase from Burkholderia mallei (strain ATCC 23344).